The chain runs to 90 residues: U7-theraphotoxin-Hhn1e (90 aa).

Positions 1–19 (MKTAIFTVVLALAVFAVLS) are cleaved as a signal peptide. Positions 20-50 (FGWEANEKALSEEFTELIHEKEAASETEARE) are excised as a propeptide. Cystine bridges form between Cys-51-Cys-65, Cys-58-Cys-70, and Cys-64-Cys-81.

The protein belongs to the neurotoxin 10 (Hwtx-1) family. 13 (Hntx-13) subfamily. In terms of tissue distribution, expressed by the venom gland.

It is found in the secreted. Its function is as follows. Ion channel inhibitor. The polypeptide is U7-theraphotoxin-Hhn1e (Cyriopagopus hainanus (Chinese bird spider)).